The chain runs to 248 residues: TPR repeat-containing protein slr0751 (248 aa).

TPR repeat units lie at residues 61–94, 95–128, 129–162, and 163–196; these read PEAI…SPDS, PETH…DRYY, IPPY…DPNR, and YKAY…RPDY.

This chain is TPR repeat-containing protein slr0751, found in Synechocystis sp. (strain ATCC 27184 / PCC 6803 / Kazusa).